The sequence spans 216 residues: 3-isopropylmalate dehydratase small subunit (216 aa).

This sequence belongs to the LeuD family. LeuD type 1 subfamily. As to quaternary structure, heterodimer of LeuC and LeuD.

The enzyme catalyses (2R,3S)-3-isopropylmalate = (2S)-2-isopropylmalate. Its pathway is amino-acid biosynthesis; L-leucine biosynthesis; L-leucine from 3-methyl-2-oxobutanoate: step 2/4. Its function is as follows. Catalyzes the isomerization between 2-isopropylmalate and 3-isopropylmalate, via the formation of 2-isopropylmaleate. The protein is 3-isopropylmalate dehydratase small subunit of Polaromonas sp. (strain JS666 / ATCC BAA-500).